We begin with the raw amino-acid sequence, 111 residues long: Probable 4-amino-4-deoxy-L-arabinose-phosphoundecaprenol flippase subunit ArnE (111 aa).

3 consecutive transmembrane segments (helical) span residues 38-58, 61-81, and 91-111; these read LWLG…LLVL, LPVG…TLAA, and PRHW…GSAA. In terms of domain architecture, EamA spans 40–109; the sequence is LGLALICMGA…IISGIIILGS (70 aa).

This sequence belongs to the ArnE family. In terms of assembly, heterodimer of ArnE and ArnF.

The protein localises to the cell inner membrane. The protein operates within bacterial outer membrane biogenesis; lipopolysaccharide biosynthesis. Its function is as follows. Translocates 4-amino-4-deoxy-L-arabinose-phosphoundecaprenol (alpha-L-Ara4N-phosphoundecaprenol) from the cytoplasmic to the periplasmic side of the inner membrane. This is Probable 4-amino-4-deoxy-L-arabinose-phosphoundecaprenol flippase subunit ArnE from Salmonella agona (strain SL483).